The following is a 154-amino-acid chain: Large ribosomal subunit protein uL15 (154 aa).

Residues 1 to 44 (MKLNELGNCKGATRNRKRVGRGIGSGTGKTSGRGVKGQKSRSGV) form a disordered region. Positions 21 to 35 (RGIGSGTGKTSGRGV) are enriched in gly residues.

This sequence belongs to the universal ribosomal protein uL15 family. Part of the 50S ribosomal subunit.

Its function is as follows. Binds to the 23S rRNA. This chain is Large ribosomal subunit protein uL15, found in Bartonella quintana (strain Toulouse) (Rochalimaea quintana).